The chain runs to 294 residues: Probable HTH-type transcriptional regulator LrrA (294 aa).

In terms of domain architecture, HTH lysR-type spans 1-58 (MNITQLQILAAVVETGNFSAAALQLDLSQSAVSRAIAALEDELGVVLLSRGRFGARPT). The segment at residues 18–37 (FSAAALQLDLSQSAVSRAIA) is a DNA-binding region (H-T-H motif).

It belongs to the LysR transcriptional regulatory family.

The sequence is that of Probable HTH-type transcriptional regulator LrrA (lrrA) from Synechococcus elongatus (strain ATCC 33912 / PCC 7942 / FACHB-805) (Anacystis nidulans R2).